We begin with the raw amino-acid sequence, 123 residues long: cAMP-responsive element-binding protein-like 2 (123 aa).

The tract at residues 1–24 (MDDSKVVGGKVKKPGKRGRKPAKI) is disordered. Residues 10–21 (KVKKPGKRGRKP) show a composition bias toward basic residues. A bZIP domain is found at 23 to 86 (KIDLKAKLER…MAMDQGKIPS (64 aa)). Residues 29-60 (KLERSRQSARECRARKKLRYQYLEELVSSRER) are basic motif. The tract at residues 62–69 (ICALREEL) is leucine-zipper. Positions 93–123 (TGEEQNKSQQNSSRHPKAGKTDANTNSLVGN) are disordered. The segment covering 114–123 (DANTNSLVGN) has biased composition (polar residues).

Belongs to the bZIP family. ATF subfamily. As to quaternary structure, interacts with CREB1; regulates CREB1 phosphorylation, stability and transcriptional activity. In terms of processing, phosphorylated by AMPK.

Its subcellular location is the nucleus. Probable regulator of CREB1 transcriptional activity which is involved in adipose cells differentiation. May also play a regulatory role in the cell cycle. This chain is cAMP-responsive element-binding protein-like 2 (Crebl2), found in Rattus norvegicus (Rat).